The sequence spans 232 residues: 7-cyano-7-deazaguanine synthase (232 aa).

An ATP-binding site is contributed by 8–18 (FSGGQDSTTCL). The Zn(2+) site is built by C187, C196, C199, and C202.

It belongs to the QueC family. Requires Zn(2+) as cofactor.

The enzyme catalyses 7-carboxy-7-deazaguanine + NH4(+) + ATP = 7-cyano-7-deazaguanine + ADP + phosphate + H2O + H(+). Its pathway is purine metabolism; 7-cyano-7-deazaguanine biosynthesis. Functionally, catalyzes the ATP-dependent conversion of 7-carboxy-7-deazaguanine (CDG) to 7-cyano-7-deazaguanine (preQ(0)). This is 7-cyano-7-deazaguanine synthase from Vibrio campbellii (strain ATCC BAA-1116).